Here is a 259-residue protein sequence, read N- to C-terminus: MSFMIIEEIKERALNLLSEKEEDFKVIDFSFALPYSYVLIESNGKKALGVAMTLLEEYRGHGNRKDLNINKNLEEFINMADSFDIVERTLGVAAINAVSQYYFNFEANGKDAAELVLNRDDIKKIAFVGNMIPVVNMLKKSEKFDIYVFERSPSLLMDGVLSDAFEYRLLPEMDAVFISGTTLLNDTLDFVLDRAKNAKLKILVGPTAQSLPELFKGFGITHIASTKIIDVDKALLYLKFASSSMLFKGASKKYTMEVE.

This is an uncharacterized protein from Methanocaldococcus jannaschii (strain ATCC 43067 / DSM 2661 / JAL-1 / JCM 10045 / NBRC 100440) (Methanococcus jannaschii).